The primary structure comprises 257 residues: Ribonuclease HII (257 aa).

The 186-residue stretch at 72–257 (TYIAGIDEVG…FAPIKDMIQK (186 aa)) folds into the RNase H type-2 domain. 3 residues coordinate a divalent metal cation: D78, E79, and D170.

This sequence belongs to the RNase HII family. It depends on Mn(2+) as a cofactor. Requires Mg(2+) as cofactor.

It localises to the cytoplasm. The catalysed reaction is Endonucleolytic cleavage to 5'-phosphomonoester.. Its function is as follows. Endonuclease that specifically degrades the RNA of RNA-DNA hybrids. This chain is Ribonuclease HII, found in Bacillus thuringiensis (strain Al Hakam).